Here is a 231-residue protein sequence, read N- to C-terminus: Proteasome subunit alpha type-2 (231 aa).

The protein belongs to the peptidase T1A family. As to quaternary structure, the 26S proteasome consists of a 20S proteasome core and two 19S regulatory subunits. The 20S proteasome core is composed of 28 subunits that are arranged in four stacked rings, resulting in a barrel-shaped structure. The two end rings are each formed by seven alpha subunits, and the two central rings are each formed by seven beta subunits. The catalytic chamber with the active sites is on the inside of the barrel.

It is found in the cytoplasm. The protein localises to the nucleus. Functionally, the proteasome is a multicatalytic proteinase complex which is characterized by its ability to cleave peptides with Arg, Phe, Tyr, Leu, and Glu adjacent to the leaving group at neutral or slightly basic pH. The proteasome has an ATP-dependent proteolytic activity. The polypeptide is Proteasome subunit alpha type-2 (Trypanosoma brucei brucei).